Here is a 125-residue protein sequence, read N- to C-terminus: Putative zinc finger A20 and AN1 domain-containing stress-associated protein 8 (125 aa).

Residues threonine 2 to serine 36 form an A20-type zinc finger. Residues cysteine 8, cysteine 12, cysteine 24, cysteine 27, cysteine 80, cysteine 82, histidine 96, and cysteine 98 each contribute to the Zn(2+) site. The AN1-type; degenerate zinc-finger motif lies at leucine 61–alanine 106.

May be involved in environmental stress response. This Arabidopsis thaliana (Mouse-ear cress) protein is Putative zinc finger A20 and AN1 domain-containing stress-associated protein 8 (SAP8).